The sequence spans 75 residues: Translational regulator CsrA (75 aa).

This sequence belongs to the CsrA/RsmA family. Homodimer; the beta-strands of each monomer intercalate to form a hydrophobic core, while the alpha-helices form wings that extend away from the core.

It localises to the cytoplasm. A translational regulator that binds mRNA to regulate translation initiation and/or mRNA stability. Usually binds in the 5'-UTR at or near the Shine-Dalgarno sequence preventing ribosome-binding, thus repressing translation. Its main target seems to be the major flagellin gene, while its function is anatagonized by FliW. The chain is Translational regulator CsrA from Alkaliphilus metalliredigens (strain QYMF).